The primary structure comprises 207 residues: 2,3-bisphosphoglycerate-dependent phosphoglycerate mutase (207 aa).

Substrate-binding positions include 10–17 (RHGQSEWN), 23–24 (TG), R62, 89–92 (ERDY), K100, 116–117 (RR), and 160–161 (GN). H11 serves as the catalytic Tele-phosphohistidine intermediate. The active-site Proton donor/acceptor is the E89.

Belongs to the phosphoglycerate mutase family. BPG-dependent PGAM subfamily. In terms of assembly, homodimer.

The catalysed reaction is (2R)-2-phosphoglycerate = (2R)-3-phosphoglycerate. Its pathway is carbohydrate degradation; glycolysis; pyruvate from D-glyceraldehyde 3-phosphate: step 3/5. Its function is as follows. Catalyzes the interconversion of 2-phosphoglycerate and 3-phosphoglycerate. This chain is 2,3-bisphosphoglycerate-dependent phosphoglycerate mutase, found in Rhodopseudomonas palustris (strain BisB18).